Consider the following 224-residue polypeptide: LexA repressor (224 aa).

Positions 31–51 (RAEIAAELGFKSANAAEEHLQ) form a DNA-binding region, H-T-H motif. Active-site for autocatalytic cleavage activity residues include serine 142 and lysine 179.

This sequence belongs to the peptidase S24 family. As to quaternary structure, homodimer.

It catalyses the reaction Hydrolysis of Ala-|-Gly bond in repressor LexA.. Its function is as follows. Represses a number of genes involved in the response to DNA damage (SOS response), including recA and lexA. In the presence of single-stranded DNA, RecA interacts with LexA causing an autocatalytic cleavage which disrupts the DNA-binding part of LexA, leading to derepression of the SOS regulon and eventually DNA repair. The protein is LexA repressor of Acidovorax ebreus (strain TPSY) (Diaphorobacter sp. (strain TPSY)).